We begin with the raw amino-acid sequence, 287 residues long: Large ribosomal subunit protein uL2 (287 aa).

The disordered stretch occupies residues 221 to 287 (RGSVMNPCDH…SKRSRGGRDS (67 aa)). The span at 258-287 (KTRKKNKPSNKLVVRRRRRISKRSRGGRDS) shows a compositional bias: basic residues.

This sequence belongs to the universal ribosomal protein uL2 family. Part of the 50S ribosomal subunit. Forms a bridge to the 30S subunit in the 70S ribosome.

One of the primary rRNA binding proteins. Required for association of the 30S and 50S subunits to form the 70S ribosome, for tRNA binding and peptide bond formation. It has been suggested to have peptidyltransferase activity; this is somewhat controversial. Makes several contacts with the 16S rRNA in the 70S ribosome. This Prochlorococcus marinus (strain MIT 9312) protein is Large ribosomal subunit protein uL2.